Consider the following 113-residue polypeptide: Molt-inhibiting hormone (113 aa).

An N-terminal signal peptide occupies residues 1–35; it reads MMSRTESRYSSQRTWLLSMVVLAALWSISVQRATA. Disulfide bonds link cysteine 42-cysteine 79, cysteine 59-cysteine 75, and cysteine 62-cysteine 88.

This sequence belongs to the arthropod CHH/MIH/GIH/VIH hormone family.

The protein resides in the secreted. In terms of biological role, inhibits Y-organs where molting hormone (ecdysteroid) is secreted. A molting cycle is initiated when MIH secretion diminishes or stops. The polypeptide is Molt-inhibiting hormone (Metacarcinus magister (Dungeness crab)).